The sequence spans 293 residues: Homoserine kinase (293 aa).

84 to 94 (PLSRGLGSSSA) is a binding site for ATP.

This sequence belongs to the GHMP kinase family. Homoserine kinase subfamily.

The protein resides in the cytoplasm. The catalysed reaction is L-homoserine + ATP = O-phospho-L-homoserine + ADP + H(+). Its pathway is amino-acid biosynthesis; L-threonine biosynthesis; L-threonine from L-aspartate: step 4/5. Catalyzes the ATP-dependent phosphorylation of L-homoserine to L-homoserine phosphate. The polypeptide is Homoserine kinase (Nitratiruptor sp. (strain SB155-2)).